Consider the following 430-residue polypeptide: DNA polymerase IV 1 (430 aa).

The UmuC domain maps to 45–225; sequence LAHIDCDAFY…KPVTLIWGVG (181 aa). Positions 49 and 142 each coordinate Mg(2+). Residue Glu-143 is part of the active site.

This sequence belongs to the DNA polymerase type-Y family. In terms of assembly, monomer. Mg(2+) is required as a cofactor.

The protein resides in the cytoplasm. It catalyses the reaction DNA(n) + a 2'-deoxyribonucleoside 5'-triphosphate = DNA(n+1) + diphosphate. Its function is as follows. Poorly processive, error-prone DNA polymerase involved in untargeted mutagenesis. Copies undamaged DNA at stalled replication forks, which arise in vivo from mismatched or misaligned primer ends. These misaligned primers can be extended by PolIV. Exhibits no 3'-5' exonuclease (proofreading) activity. May be involved in translesional synthesis, in conjunction with the beta clamp from PolIII. The chain is DNA polymerase IV 1 (dinB1) from Rhizobium meliloti (strain 1021) (Ensifer meliloti).